Consider the following 229-residue polypeptide: MAKKKAFTPLLYLVSIVFLPWWISLLFQKSLESWVTNWWNTRQSETFLNDIEEKSILEKFIELEELLFLEEMIKEYSETHLQNLRIGIHKETIQLIKIQNEGRIHTILHFSTNIICFIILSGYSILGNKELVILNSWAQEFLYNLSDTIKAFSLLLLTDLCIGFHSPHGWELMIGFVYKDFGFVHNDQIISGLVSTFPVILDTILKYWIFRYLNRVSPSLVVIYHSMND.

The next 3 membrane-spanning stretches (helical) occupy residues Phe-7 to Phe-27, Ile-107 to Gly-127, and Ile-189 to Ile-209.

This sequence belongs to the CemA family.

The protein resides in the plastid. Its subcellular location is the chloroplast inner membrane. It catalyses the reaction K(+)(in) + H(+)(out) = K(+)(out) + H(+)(in). Functionally, contributes to K(+)/H(+) antiport activity by supporting proton efflux to control proton extrusion and homeostasis in chloroplasts in a light-dependent manner to modulate photosynthesis. Prevents excessive induction of non-photochemical quenching (NPQ) under continuous-light conditions. Indirectly promotes efficient inorganic carbon uptake into chloroplasts. The polypeptide is Potassium/proton antiporter CemA (Helianthus annuus (Common sunflower)).